A 213-amino-acid chain; its full sequence is Uridine kinase (213 aa).

13–20 (GASASGKS) lines the ATP pocket.

Belongs to the uridine kinase family.

It localises to the cytoplasm. It carries out the reaction uridine + ATP = UMP + ADP + H(+). The catalysed reaction is cytidine + ATP = CMP + ADP + H(+). It functions in the pathway pyrimidine metabolism; CTP biosynthesis via salvage pathway; CTP from cytidine: step 1/3. It participates in pyrimidine metabolism; UMP biosynthesis via salvage pathway; UMP from uridine: step 1/1. The polypeptide is Uridine kinase (Haemophilus influenzae (strain PittEE)).